Reading from the N-terminus, the 349-residue chain is S-adenosylmethionine:tRNA ribosyltransferase-isomerase (349 aa).

This sequence belongs to the QueA family. In terms of assembly, monomer.

It is found in the cytoplasm. It catalyses the reaction 7-aminomethyl-7-carbaguanosine(34) in tRNA + S-adenosyl-L-methionine = epoxyqueuosine(34) in tRNA + adenine + L-methionine + 2 H(+). It functions in the pathway tRNA modification; tRNA-queuosine biosynthesis. Functionally, transfers and isomerizes the ribose moiety from AdoMet to the 7-aminomethyl group of 7-deazaguanine (preQ1-tRNA) to give epoxyqueuosine (oQ-tRNA). The sequence is that of S-adenosylmethionine:tRNA ribosyltransferase-isomerase from Cupriavidus pinatubonensis (strain JMP 134 / LMG 1197) (Cupriavidus necator (strain JMP 134)).